Consider the following 1113-residue polypeptide: Antigenic protein P1 (1113 aa).

The chain crosses the membrane as a helical span at residues 7–27 (IIAVVAIASAIVTGVVVIVVV). N-linked (GlcNAc...) asparagine glycans are attached at residues asparagine 121, asparagine 207, asparagine 225, asparagine 233, asparagine 274, asparagine 533, asparagine 576, asparagine 622, asparagine 675, asparagine 679, asparagine 730, asparagine 753, asparagine 880, asparagine 899, asparagine 907, asparagine 972, and asparagine 995. A Peptidase M60 domain is found at 159–473 (VFGQRAVAWA…SYVNMAHAFG (315 aa)). Residues 648–800 (LDPHQVEYEV…TEESSVDVSK (153 aa)) form the PA14 domain.

Its subcellular location is the membrane. The sequence is that of Antigenic protein P1 from Entamoeba histolytica (strain ATCC 30459 / HM-1:IMSS / ABRM).